A 266-amino-acid chain; its full sequence is Small ribosomal subunit protein uS2 (266 aa).

The segment at 233–266 (AVREEEFASAPDAGKKGRQAQPKKGKRASDAAAE) is disordered. Positions 248–258 (KGRQAQPKKGK) are enriched in basic residues.

This sequence belongs to the universal ribosomal protein uS2 family.

This Xylella fastidiosa (strain M23) protein is Small ribosomal subunit protein uS2.